The primary structure comprises 446 residues: tRNA-2-methylthio-N(6)-dimethylallyladenosine synthase (446 aa).

The MTTase N-terminal domain maps to 2–122 (KKAYVKSYGC…LPDLLRQSRE (121 aa)). Residues C11, C47, C85, C157, C161, and C164 each coordinate [4Fe-4S] cluster. In terms of domain architecture, Radical SAM core spans 143 to 375 (RNRGVTGFLT…QDLLDRQRHA (233 aa)). The TRAM domain occupies 378-440 (AASVGTLTEI…SNSLFGEALE (63 aa)).

The protein belongs to the methylthiotransferase family. MiaB subfamily. In terms of assembly, monomer. [4Fe-4S] cluster serves as cofactor.

The protein resides in the cytoplasm. The catalysed reaction is N(6)-dimethylallyladenosine(37) in tRNA + (sulfur carrier)-SH + AH2 + 2 S-adenosyl-L-methionine = 2-methylsulfanyl-N(6)-dimethylallyladenosine(37) in tRNA + (sulfur carrier)-H + 5'-deoxyadenosine + L-methionine + A + S-adenosyl-L-homocysteine + 2 H(+). In terms of biological role, catalyzes the methylthiolation of N6-(dimethylallyl)adenosine (i(6)A), leading to the formation of 2-methylthio-N6-(dimethylallyl)adenosine (ms(2)i(6)A) at position 37 in tRNAs that read codons beginning with uridine. The chain is tRNA-2-methylthio-N(6)-dimethylallyladenosine synthase from Methylorubrum extorquens (strain CM4 / NCIMB 13688) (Methylobacterium extorquens).